The chain runs to 159 residues: V-type proton ATPase 16 kDa proteolipid subunit c (159 aa).

The Lumenal segment spans residues 1 to 11 (MSEEGSPMYSP). The chain crosses the membrane as a helical span at residues 12 to 32 (FFGVMGAASAMVFSALGAAYG). Over 33 to 54 (TAKSGVGISAMSVMRPELIMKC) the chain is Cytoplasmic. Residues 55 to 75 (IIPVVMAGIIAIYGLVVAVLI) traverse the membrane as a helical segment. Over 76 to 93 (AGKLDEAPTYTLYQGFVH) the chain is Lumenal. The chain crosses the membrane as a helical span at residues 94–114 (MGAGLSVGLSGLAAGFAIGIV). At 115 to 132 (GDAGVRGTAQQPRLYVGM) the chain is on the cytoplasmic side. The helical transmembrane segment at 133–153 (ILILIFAEVLGLYGLIVAIFL) threads the bilayer. The Lumenal segment spans residues 154–159 (YTKTSS).

This sequence belongs to the V-ATPase proteolipid subunit family. In terms of assembly, V-ATPase is a heteromultimeric enzyme made up of two complexes: the ATP-hydrolytic V1 complex and the proton translocation V0 complex. The V1 complex consists of three catalytic AB heterodimers that form a heterohexamer, three peripheral stalks each consisting of EG heterodimers, one central rotor including subunits D and F, and the regulatory subunits C and H. The proton translocation complex V0 consists of the proton transport subunit a, a ring of proteolipid subunits c9c'', rotary subunit d, subunits e and f, and two accessory subunits.

The protein localises to the vacuole membrane. In terms of biological role, proton-conducting pore forming subunit of the V0 complex of vacuolar(H+)-ATPase (V-ATPase), a multisubunit enzyme composed of a peripheral complex (V1) that hydrolyzes ATP and a membrane integral complex (V0) that translocates protons. V-ATPase is responsible for acidifying and maintaining the pH of intracellular compartments and in some cell types, is targeted to the plasma membrane, where it is responsible for acidifying the extracellular environment. This Nephrops norvegicus (Norway lobster) protein is V-type proton ATPase 16 kDa proteolipid subunit c.